The following is a 74-amino-acid chain: Large ribosomal subunit protein bL31 (74 aa).

This sequence belongs to the bacterial ribosomal protein bL31 family. Type A subfamily. Part of the 50S ribosomal subunit.

In terms of biological role, binds the 23S rRNA. The chain is Large ribosomal subunit protein bL31 from Synechococcus sp. (strain JA-2-3B'a(2-13)) (Cyanobacteria bacterium Yellowstone B-Prime).